We begin with the raw amino-acid sequence, 409 residues long: Rho-GTPase-activating protein BAG7 (409 aa).

Over residues 1-26 (MFNMNLLSTPSSEEGSPQNRSSSMSS) the composition is skewed to polar residues. The disordered stretch occupies residues 1-32 (MFNMNLLSTPSSEEGSPQNRSSSMSSVEGKKD). The region spanning 50–257 (VSLEESLKVA…FLILHASDII (208 aa)) is the Rho-GAP domain. The disordered stretch occupies residues 362-409 (KLLGNVGNSSNTGIKDPTERVPRGEHKTKHKQRQSWLRRLTSPSRTQP). The span at 377–386 (DPTERVPRGE) shows a compositional bias: basic and acidic residues.

Interacts with RHO1.

In terms of biological role, acts in signal transduction. Activates RHO1. The sequence is that of Rho-GTPase-activating protein BAG7 (BAG7) from Saccharomyces cerevisiae (strain ATCC 204508 / S288c) (Baker's yeast).